The sequence spans 461 residues: Cysteine--tRNA ligase (461 aa).

Cys-28 serves as a coordination point for Zn(2+). Residues 30–40 (ITVYDLCHIGH) carry the 'HIGH' region motif. Zn(2+) contacts are provided by Cys-209, His-234, and Glu-238. A 'KMSKS' region motif is present at residues 266 to 270 (KMSKS). Lys-269 contributes to the ATP binding site.

This sequence belongs to the class-I aminoacyl-tRNA synthetase family. In terms of assembly, monomer. The cofactor is Zn(2+).

Its subcellular location is the cytoplasm. It catalyses the reaction tRNA(Cys) + L-cysteine + ATP = L-cysteinyl-tRNA(Cys) + AMP + diphosphate. This chain is Cysteine--tRNA ligase, found in Salmonella arizonae (strain ATCC BAA-731 / CDC346-86 / RSK2980).